A 270-amino-acid chain; its full sequence is Proteasome inhibitor PI31 subunit (270 aa).

Residue Ala-2 is modified to N-acetylalanine. Residues 2–150 are important for homodimerization and interaction with FBXO7; sequence AGLEVLFASA…PIHEQWEKAN (149 aa). Residue Ser-152 is modified to Phosphoserine. An Omega-N-methylarginine modification is found at Arg-204. An Asymmetric dimethylarginine modification is found at Arg-218. Residues 220–270 form a disordered region; that stretch reads LIDPSSGLPNRLPPGAVPPGARFDPFGPIGTSPSGPNPDHLPPPGYDDMYL. Position 230 is an omega-N-methylarginine (Arg-230). Ser-251 carries the post-translational modification Phosphoserine. Residues 254–264 are compositionally biased toward pro residues; sequence GPNPDHLPPPG.

Belongs to the proteasome inhibitor PI31 family. In terms of assembly, monomer and homodimer. Interacts with FBXO7.

The protein localises to the cytoplasm. Its subcellular location is the endoplasmic reticulum. Plays an important role in control of proteasome function. Inhibits the hydrolysis of protein and peptide substrates by the 20S proteasome. Also inhibits the activation of the proteasome by the proteasome regulatory proteins PA700 and PA28. The sequence is that of Proteasome inhibitor PI31 subunit (PSMF1) from Bos taurus (Bovine).